Here is a 101-residue protein sequence, read N- to C-terminus: Chaperone modulatory protein CbpM (101 aa).

It belongs to the CbpM family.

In terms of biological role, interacts with CbpA and inhibits both the DnaJ-like co-chaperone activity and the DNA binding activity of CbpA. Together with CbpA, modulates the activity of the DnaK chaperone system. Does not inhibit the co-chaperone activity of DnaJ. The chain is Chaperone modulatory protein CbpM from Escherichia coli (strain K12 / MC4100 / BW2952).